A 391-amino-acid chain; its full sequence is Choline/ethanolaminephosphotransferase 1 (391 aa).

Topologically, residues 1-49 are lumenal; it reads MGYFVPDSHIENLKSYKYQSEDRSLVSKYFLKPFWQRFCHIFPTWMAPN. A helical membrane pass occupies residues 50-69; it reads IITLSGFAFIVINVLTVFYY. Residues 70–172 are Cytoplasmic-facing; that stretch reads DPNLNTDTPR…YHTHTLYLSE (103 aa). A helical membrane pass occupies residues 173-193; that stretch reads FSGPVEGILIVCVSLILTGIY. Residues 194-211 are Lumenal-facing; it reads GKQVIWHTYLFTITVGDK. The chain crosses the membrane as a helical span at residues 212–232; that stretch reads VIDVDTLDIVFSLAVFGLVMN. At 233–264 the chain is on the cytoplasmic side; the sequence is ALSAKRNVDKYYRNSTSSANNITQIEQDSAIK. A helical transmembrane segment spans residues 265 to 282; the sequence is GLLPFFAYYASIALLVWM. Topologically, residues 283–285 are lumenal; it reads QPS. The helical transmembrane segment at 286 to 308 threads the bilayer; that stretch reads FITLSFILSVGFTGAFTVGRIIV. Residues 309-321 are Cytoplasmic-facing; it reads CHLTKQSFPMFNA. Residues 322-342 form a helical membrane-spanning segment; that stretch reads PMLIPLCQIVLYKICLSLWGI. Topologically, residues 343-346 are lumenal; the sequence is ESNK. Residues 347 to 367 traverse the membrane as a helical segment; the sequence is IVFALSWLGFGLSLGVHIMFM. At 368–391 the chain is on the cytoplasmic side; the sequence is NDIIHEFTEYLDVYALSIKRSKLT.

The protein belongs to the CDP-alcohol phosphatidyltransferase class-I family. Requires Mg(2+) as cofactor.

The protein resides in the golgi apparatus membrane. The enzyme catalyses CDP-ethanolamine + a 1,2-diacyl-sn-glycerol = a 1,2-diacyl-sn-glycero-3-phosphoethanolamine + CMP + H(+). The catalysed reaction is CDP-choline + a 1,2-diacyl-sn-glycerol = a 1,2-diacyl-sn-glycero-3-phosphocholine + CMP + H(+). It carries out the reaction CDP-N-methylethanolamine + a 1,2-diacyl-sn-glycerol = a 1,2-diacyl-sn-glycero-3-phospho-N-methylethanolamine + CMP + H(+). It catalyses the reaction CDP-N,N-dimethylethanolamine + a 1,2-diacyl-sn-glycerol = a 1,2-diacyl-sn-glycero-3-phospho-N,N-dimethylethanolamine + CMP + H(+). The enzyme catalyses 1,2-di-(9Z-octadecenoyl)-glycerol + CDP-choline = 1,2-di-(9Z-octadecenoyl)-sn-glycero-3-phosphocholine + CMP + H(+). The catalysed reaction is 1,2-di-(9Z-octadecenoyl)-glycerol + CDP-ethanolamine = 1,2-di-(9Z-octadecenoyl)-sn-glycero-3-phosphoethanolamine + CMP + H(+). The protein operates within phospholipid metabolism; phosphatidylethanolamine biosynthesis; phosphatidylethanolamine from ethanolamine: step 3/3. It participates in phospholipid metabolism; phosphatidylcholine biosynthesis; phosphatidylcholine from phosphocholine: step 2/2. Its activity is regulated as follows. Requires a divalent cation activator, and is inhibited by CMP. Activated by phospholipids, especially phosphatidylcholine. In terms of biological role, catalyzes the final step in the CDP-ethanolamine route leading to phosphatidylethanolamine (PE). Can also catalyze the formation of phosphatidylcholine (PC) from CDP-choline, but does not substantially contribute to PC biosynthesis. Preferentially uses CDP-dimethylethanolamine and CDP-propanolamine as aminoalcohol substrates. Shows highest activity toward di-unsaturated diacylglycerol species as lipid substrates. The CDP-ethanolamine pathway may play a role in maintaining the proper PE species distribution. This Saccharomyces cerevisiae (strain ATCC 204508 / S288c) (Baker's yeast) protein is Choline/ethanolaminephosphotransferase 1 (EPT1).